Consider the following 149-residue polypeptide: SsrA-binding protein (149 aa).

Positions 121 to 149 (GKGEHDKRDTIKDREGKREVERAMKSRSR) are disordered.

It belongs to the SmpB family.

Its subcellular location is the cytoplasm. Functionally, required for rescue of stalled ribosomes mediated by trans-translation. Binds to transfer-messenger RNA (tmRNA), required for stable association of tmRNA with ribosomes. tmRNA and SmpB together mimic tRNA shape, replacing the anticodon stem-loop with SmpB. tmRNA is encoded by the ssrA gene; the 2 termini fold to resemble tRNA(Ala) and it encodes a 'tag peptide', a short internal open reading frame. During trans-translation Ala-aminoacylated tmRNA acts like a tRNA, entering the A-site of stalled ribosomes, displacing the stalled mRNA. The ribosome then switches to translate the ORF on the tmRNA; the nascent peptide is terminated with the 'tag peptide' encoded by the tmRNA and targeted for degradation. The ribosome is freed to recommence translation, which seems to be the essential function of trans-translation. This chain is SsrA-binding protein, found in Polaromonas sp. (strain JS666 / ATCC BAA-500).